We begin with the raw amino-acid sequence, 299 residues long: Non-structural protein V (299 aa).

2 disordered regions span residues 30-101 (QEVS…EEDT) and 128-163 (SLMV…SEGN). The span at 79–99 (EDQRGREDNTAPVEAKDRIEE) shows a compositional bias: basic and acidic residues. The span at 148–160 (LDDSIEDSSEDYS) shows a compositional bias: acidic residues. The Zn(2+) site is built by histidine 232, cysteine 251, cysteine 255, cysteine 267, cysteine 269, cysteine 272, cysteine 276, and cysteine 279.

Blocks host interferon signaling. The polypeptide is Non-structural protein V (P/V) (Phocidae (true seals)).